Here is a 184-residue protein sequence, read N- to C-terminus: Ribosome-recycling factor (184 aa).

The protein belongs to the RRF family.

The protein resides in the cytoplasm. Functionally, responsible for the release of ribosomes from messenger RNA at the termination of protein biosynthesis. May increase the efficiency of translation by recycling ribosomes from one round of translation to another. This Clostridium botulinum (strain Okra / Type B1) protein is Ribosome-recycling factor.